Here is a 78-residue protein sequence, read N- to C-terminus: Large ribosomal subunit protein uL10 (78 aa).

Residues 40 to 50 (AAAAAATAPAA) are compositionally biased toward low complexity. Residues 40–78 (AAAAAATAPAAETKKEEKKEEKKEETEESDDDIGLSLFH) form a disordered region. The segment covering 51–64 (ETKKEEKKEEKKEE) has biased composition (basic and acidic residues).

It belongs to the universal ribosomal protein uL10 family. In terms of assembly, P0 forms a pentameric complex by interaction with dimers of P1 and P2.

The protein resides in the nucleus. Its subcellular location is the cytoplasm. Functionally, ribosomal protein P0 is the functional equivalent of E.coli protein L10. The polypeptide is Large ribosomal subunit protein uL10 (Culicoides nubeculosus (Biting midge)).